A 429-amino-acid chain; its full sequence is Phosphoribosylamine--glycine ligase (429 aa).

Residues lysine 109 to glutamate 316 enclose the ATP-grasp domain. Leucine 135–serine 196 lines the ATP pocket. Residues serine 212 to proline 237 are disordered. Residues glutamine 213–threonine 223 show a composition bias toward basic and acidic residues. Glutamate 286 and asparagine 288 together coordinate Mg(2+).

The protein belongs to the GARS family. In terms of assembly, monomer. Requires Mg(2+) as cofactor. Mn(2+) serves as cofactor.

The enzyme catalyses 5-phospho-beta-D-ribosylamine + glycine + ATP = N(1)-(5-phospho-beta-D-ribosyl)glycinamide + ADP + phosphate + H(+). It participates in purine metabolism; IMP biosynthesis via de novo pathway; N(1)-(5-phospho-D-ribosyl)glycinamide from 5-phospho-alpha-D-ribose 1-diphosphate: step 2/2. The sequence is that of Phosphoribosylamine--glycine ligase from Escherichia coli O157:H7.